The following is a 176-amino-acid chain: NAD(P)H-quinone oxidoreductase subunit 6, chloroplastic (176 aa).

The next 5 membrane-spanning stretches (helical) occupy residues 10 to 30 (FLLV…VLLP), 32 to 52 (PIFS…LYIL), 61 to 81 (AQLL…VMFM), 92 to 112 (LWTV…FLLM), and 152 to 172 (FFLP…GAIS).

Belongs to the complex I subunit 6 family. NDH is composed of at least 16 different subunits, 5 of which are encoded in the nucleus.

It is found in the plastid. Its subcellular location is the chloroplast thylakoid membrane. It carries out the reaction a plastoquinone + NADH + (n+1) H(+)(in) = a plastoquinol + NAD(+) + n H(+)(out). It catalyses the reaction a plastoquinone + NADPH + (n+1) H(+)(in) = a plastoquinol + NADP(+) + n H(+)(out). Functionally, NDH shuttles electrons from NAD(P)H:plastoquinone, via FMN and iron-sulfur (Fe-S) centers, to quinones in the photosynthetic chain and possibly in a chloroplast respiratory chain. The immediate electron acceptor for the enzyme in this species is believed to be plastoquinone. Couples the redox reaction to proton translocation, and thus conserves the redox energy in a proton gradient. In Capsella bursa-pastoris (Shepherd's purse), this protein is NAD(P)H-quinone oxidoreductase subunit 6, chloroplastic (ndhG).